The primary structure comprises 237 residues: Peptidase E (237 aa).

Active-site charge relay system residues include Ser-122, Asp-137, and His-159.

This sequence belongs to the peptidase S51 family.

The protein localises to the cytoplasm. It catalyses the reaction Dipeptidase E catalyzes the hydrolysis of dipeptides Asp-|-Xaa. It does not act on peptides with N-terminal Glu, Asn or Gln, nor does it cleave isoaspartyl peptides.. Functionally, hydrolyzes dipeptides containing N-terminal aspartate residues. May play a role in allowing the cell to use peptide aspartate to spare carbon otherwise required for the synthesis of the aspartate family of amino acids. This is Peptidase E from Shewanella baltica (strain OS185).